The following is a 509-amino-acid chain: MEEFQRYIELDRSWQHNFFYPLIFQEYIYGFAYDHGLNKSILLENAGHKKYSLLIVKRLITRMYQQNHLILSANHSNQNDFFGHKHKKNLYYQIISEGFAVIVEIPFSLLLISSLGAKEKKIVKSHNLRSIHSIFPFFEDKFLHLNYVLKILIPYPIHLEILVQTLRYWVKDASSLHLLRFFLYEYRNWNSLITPQKYISIFSKKNQRLFLFLYNFHVCEYESIFVFLCNQSSHLRSTSFGALLERIYFYGKLEYLVKVKTFTKDFRLILWLFKDPFLHYVRYRGKSILASKGTSLLMYKWKYYLINFWQCHFSLWSQPRRIYINRLSKHSLDFMSFFSSVRLNSSVVRSQMVENSFLIDNPIKKFDTVVRIIPLVGSLAKAKFCNVLGHPVSKSAWTDLLDSDIIDRFGRICRNLSHYYSGSSRKKSLYRIKYILRLSCARTLARKHKSTVRAFLKRLGSEFLEEFFTEEEKVLSLILPRNFSISRGLYRGPLWYLDIICIHDLANDE.

This sequence belongs to the intron maturase 2 family. MatK subfamily.

The protein resides in the plastid. Its subcellular location is the chloroplast. In terms of biological role, usually encoded in the trnK tRNA gene intron. Probably assists in splicing its own and other chloroplast group II introns. The chain is Maturase K from Opuntia quimilo (Cactus).